The sequence spans 2271 residues: Protein Ycf2 (2271 aa).

1628–1635 (GSIGTGRS) lines the ATP pocket.

It belongs to the Ycf2 family.

The protein resides in the plastid. The protein localises to the chloroplast stroma. In terms of biological role, probable ATPase of unknown function. Its presence in a non-photosynthetic plant (Epifagus virginiana) and experiments in tobacco indicate that it has an essential function which is probably not related to photosynthesis. The chain is Protein Ycf2 from Illicium oligandrum (Star anise).